We begin with the raw amino-acid sequence, 257 residues long: 1-(5-phosphoribosyl)-5-[(5-phosphoribosylamino)methylideneamino] imidazole-4-carboxamide isomerase (257 aa).

Asp8 (proton acceptor) is an active-site residue. The Proton donor role is filled by Asp129.

This sequence belongs to the HisA/HisF family.

It localises to the cytoplasm. It carries out the reaction 1-(5-phospho-beta-D-ribosyl)-5-[(5-phospho-beta-D-ribosylamino)methylideneamino]imidazole-4-carboxamide = 5-[(5-phospho-1-deoxy-D-ribulos-1-ylimino)methylamino]-1-(5-phospho-beta-D-ribosyl)imidazole-4-carboxamide. It functions in the pathway amino-acid biosynthesis; L-histidine biosynthesis; L-histidine from 5-phospho-alpha-D-ribose 1-diphosphate: step 4/9. In Crocosphaera subtropica (strain ATCC 51142 / BH68) (Cyanothece sp. (strain ATCC 51142)), this protein is 1-(5-phosphoribosyl)-5-[(5-phosphoribosylamino)methylideneamino] imidazole-4-carboxamide isomerase.